Consider the following 409-residue polypeptide: LL-diaminopimelate aminotransferase (409 aa).

Residues tyrosine 15 and glycine 42 each contribute to the substrate site. Pyridoxal 5'-phosphate-binding positions include tyrosine 72, 108–109 (AK), tyrosine 132, asparagine 186, tyrosine 217, and 245–247 (SFS). Lysine 109, tyrosine 132, and asparagine 186 together coordinate substrate. The residue at position 248 (lysine 248) is an N6-(pyridoxal phosphate)lysine. Pyridoxal 5'-phosphate is bound by residues arginine 256 and asparagine 291. Substrate is bound by residues asparagine 291 and arginine 386.

It belongs to the class-I pyridoxal-phosphate-dependent aminotransferase family. LL-diaminopimelate aminotransferase subfamily. As to quaternary structure, homodimer. Requires pyridoxal 5'-phosphate as cofactor.

It carries out the reaction (2S,6S)-2,6-diaminopimelate + 2-oxoglutarate = (S)-2,3,4,5-tetrahydrodipicolinate + L-glutamate + H2O + H(+). Its pathway is amino-acid biosynthesis; L-lysine biosynthesis via DAP pathway; LL-2,6-diaminopimelate from (S)-tetrahydrodipicolinate (aminotransferase route): step 1/1. Its function is as follows. Involved in the synthesis of meso-diaminopimelate (m-DAP or DL-DAP), required for both lysine and peptidoglycan biosynthesis. Catalyzes the direct conversion of tetrahydrodipicolinate to LL-diaminopimelate. The chain is LL-diaminopimelate aminotransferase from Desulforapulum autotrophicum (strain ATCC 43914 / DSM 3382 / VKM B-1955 / HRM2) (Desulfobacterium autotrophicum).